Here is a 257-residue protein sequence, read N- to C-terminus: Hydroxyacylglutathione hydrolase (257 aa).

Residues His54, His56, Asp58, His59, His113, Asp137, and His175 each contribute to the Zn(2+) site.

Belongs to the metallo-beta-lactamase superfamily. Glyoxalase II family. Monomer. Zn(2+) is required as a cofactor.

The catalysed reaction is an S-(2-hydroxyacyl)glutathione + H2O = a 2-hydroxy carboxylate + glutathione + H(+). Its pathway is secondary metabolite metabolism; methylglyoxal degradation; (R)-lactate from methylglyoxal: step 2/2. Functionally, thiolesterase that catalyzes the hydrolysis of S-D-lactoyl-glutathione to form glutathione and D-lactic acid. The polypeptide is Hydroxyacylglutathione hydrolase (Gloeothece citriformis (strain PCC 7424) (Cyanothece sp. (strain PCC 7424))).